Here is a 441-residue protein sequence, read N- to C-terminus: Ribosomal protein uS12 methylthiotransferase RimO (441 aa).

Positions 8–118 constitute an MTTase N-terminal domain; sequence PKIGFVSLGC…VLEHVHHYVP (111 aa). [4Fe-4S] cluster contacts are provided by cysteine 17, cysteine 53, cysteine 82, cysteine 150, cysteine 154, and cysteine 157. Residues 136–373 form the Radical SAM core domain; that stretch reads LTPRHYAYLK…MQLQQQISAE (238 aa). The 66-residue stretch at 376 to 441 folds into the TRAM domain; that stretch reads QEKVGREILV…DEYDLWGSRV (66 aa).

This sequence belongs to the methylthiotransferase family. RimO subfamily. Requires [4Fe-4S] cluster as cofactor.

The protein resides in the cytoplasm. The enzyme catalyses L-aspartate(89)-[ribosomal protein uS12]-hydrogen + (sulfur carrier)-SH + AH2 + 2 S-adenosyl-L-methionine = 3-methylsulfanyl-L-aspartate(89)-[ribosomal protein uS12]-hydrogen + (sulfur carrier)-H + 5'-deoxyadenosine + L-methionine + A + S-adenosyl-L-homocysteine + 2 H(+). Catalyzes the methylthiolation of an aspartic acid residue of ribosomal protein uS12. The sequence is that of Ribosomal protein uS12 methylthiotransferase RimO from Citrobacter koseri (strain ATCC BAA-895 / CDC 4225-83 / SGSC4696).